A 179-amino-acid polypeptide reads, in one-letter code: Large ribosomal subunit protein uL5 (179 aa).

The protein belongs to the universal ribosomal protein uL5 family. As to quaternary structure, part of the 50S ribosomal subunit; part of the 5S rRNA/L5/L18/L25 subcomplex. Contacts the 5S rRNA and the P site tRNA. Forms a bridge to the 30S subunit in the 70S ribosome.

This is one of the proteins that bind and probably mediate the attachment of the 5S RNA into the large ribosomal subunit, where it forms part of the central protuberance. In the 70S ribosome it contacts protein S13 of the 30S subunit (bridge B1b), connecting the 2 subunits; this bridge is implicated in subunit movement. Contacts the P site tRNA; the 5S rRNA and some of its associated proteins might help stabilize positioning of ribosome-bound tRNAs. The protein is Large ribosomal subunit protein uL5 of Desulfovibrio desulfuricans (strain ATCC 27774 / DSM 6949 / MB).